Reading from the N-terminus, the 129-residue chain is Glycine cleavage system H protein (129 aa).

Residues 24-106 (IATIGISAFA…YGEGWLVKVR (83 aa)) form the Lipoyl-binding domain. The residue at position 65 (Lys-65) is an N6-lipoyllysine.

It belongs to the GcvH family. The glycine cleavage system is composed of four proteins: P, T, L and H. The cofactor is (R)-lipoate.

Its function is as follows. The glycine cleavage system catalyzes the degradation of glycine. The H protein shuttles the methylamine group of glycine from the P protein to the T protein. This chain is Glycine cleavage system H protein, found in Cyanothece sp. (strain PCC 7425 / ATCC 29141).